Consider the following 193-residue polypeptide: MRGRDEETGEFRGASRSQQRREALEIFDLGEKLVALTPAQLAKLPVPESLIPHIEESKRITSHIAHKRQLAFLAKHMRREDEQTLAAIRDALDANSDTARREVAAIHRVERWRERLLAEGDVALAELLEAYPAADRQQLRQLVRNAIHERAKNKPPRAYRELFQVLRDLSQEQGLESGDSELEDGESASEDDE.

Basic and acidic residues predominate over residues 1–10 (MRGRDEETGE). 2 disordered regions span residues 1–20 (MRGR…SQQR) and 171–193 (QEQG…EDDE). Residues 178–193 (GDSELEDGESASEDDE) are compositionally biased toward acidic residues.

The protein belongs to the DarP family.

The protein localises to the cytoplasm. Member of a network of 50S ribosomal subunit biogenesis factors which assembles along the 30S-50S interface, preventing incorrect 23S rRNA structures from forming. Promotes peptidyl transferase center (PTC) maturation. The polypeptide is Dual-action ribosomal maturation protein DarP (Xanthomonas axonopodis pv. citri (strain 306)).